The sequence spans 73 residues: Translation initiation factor IF-1 (73 aa).

In terms of domain architecture, S1-like spans 1-73 (MAKKEDTIVL…TKARVVYRHR (73 aa)).

It belongs to the IF-1 family. Component of the 30S ribosomal translation pre-initiation complex which assembles on the 30S ribosome in the order IF-2 and IF-3, IF-1 and N-formylmethionyl-tRNA(fMet); mRNA recruitment can occur at any time during PIC assembly.

Its subcellular location is the cytoplasm. Functionally, one of the essential components for the initiation of protein synthesis. Stabilizes the binding of IF-2 and IF-3 on the 30S subunit to which N-formylmethionyl-tRNA(fMet) subsequently binds. Helps modulate mRNA selection, yielding the 30S pre-initiation complex (PIC). Upon addition of the 50S ribosomal subunit IF-1, IF-2 and IF-3 are released leaving the mature 70S translation initiation complex. This chain is Translation initiation factor IF-1, found in Chlamydia muridarum (strain MoPn / Nigg).